We begin with the raw amino-acid sequence, 117 residues long: G antigen 1 (117 aa).

Residues methionine 1 to cysteine 117 form a disordered region. Composition is skewed to acidic residues over residues phenylalanine 32–glutamate 45 and glutamate 87–glutamate 96.

The protein belongs to the GAGE family. Expressed in a variety of tumor tissues but not in normal tissues, except testis.

In terms of biological role, antigen, recognized on melanoma by autologous cytolytic T-lymphocytes. This is G antigen 1 from Homo sapiens (Human).